The following is a 378-amino-acid chain: Response regulator aspartate phosphatase A (378 aa).

6 TPR repeats span residues 101–137 (YYFNFFRGMYEFKQKMFVSAMMYYKRAEKNLALVSDD), 148–181 (AEIFYNLKQTYVSMSYAVQALETYQMYETYTVRR), 183–215 (QCEFVIAGNYDDMQYPERALPHLELALDLAKKE), 222–255 (SSALYNLGNCYEKMGELQKAAEYFGKSVSICKSE), 261–294 (PHSIYSLTQVLYKQKNDAEAQKKYREGLEIARQY), and 336–369 (EELAHDAAQFYIENGQPEKALSFYEKMVHAQKQI).

Belongs to the Rap family. Homodimer. Interacts with its substrate, phosphorylated Spo0F, and its inhibitor, the PhrA pentapeptide. The RapA dimer forms a stable complex with two molecules of phosphorylated Spo0F. The complex is dissociated after dephosphorylation of Spo0F by RapA. The cofactor is Mn(2+).

Its subcellular location is the cytoplasm. Its activity is regulated as follows. Phosphatase activity is inhibited by the phosphatase regulator PhrA. Interaction with PhrA dissociates the RapA-Spo0F complex. Activity is abolished in the presence of EDTA. Functionally, involved in the regulation of sporulation. Acts as a phosphatase that specifically dephosphorylates the sporulation initiation phosphotransferase Spo0F and inhibits its activity. The chain is Response regulator aspartate phosphatase A from Bacillus subtilis (strain 168).